A 224-amino-acid polypeptide reads, in one-letter code: LexA repressor (224 aa).

Residues 31 to 51 (RAEIAAEFGFKSANAAEEHLQ) constitute a DNA-binding region (H-T-H motif). Catalysis depends on for autocatalytic cleavage activity residues serine 142 and lysine 179.

It belongs to the peptidase S24 family. In terms of assembly, homodimer.

The catalysed reaction is Hydrolysis of Ala-|-Gly bond in repressor LexA.. In terms of biological role, represses a number of genes involved in the response to DNA damage (SOS response), including recA and lexA. In the presence of single-stranded DNA, RecA interacts with LexA causing an autocatalytic cleavage which disrupts the DNA-binding part of LexA, leading to derepression of the SOS regulon and eventually DNA repair. The protein is LexA repressor of Paracidovorax citrulli (strain AAC00-1) (Acidovorax citrulli).